The primary structure comprises 350 residues: Variable large protein 4 (350 aa).

A signal peptide spans 1–18 (MRRRISAIIMTLFMVLVS). Residue cysteine 19 is the site of N-palmitoyl cysteine attachment. The S-diacylglycerol cysteine moiety is linked to residue cysteine 19.

This sequence belongs to the variable large protein (Vlp) family. Delta subfamily.

It is found in the cell outer membrane. In terms of biological role, the Vlp and Vsp proteins are antigenically distinct proteins, only one vlp or vsp gene is transcriptionally active at any one time. Switching between these genes is a mechanism of host immune response evasion. The protein is Variable large protein 4 of Borrelia hermsii.